Reading from the N-terminus, the 74-residue chain is ATP synthase subunit 9, mitochondrial (74 aa).

2 helical membrane passes run 16–36 (GLIG…IGVS) and 50–70 (ILGF…AFLL).

This sequence belongs to the ATPase C chain family. F-type ATPases have 2 components, CF(1) - the catalytic core - and CF(0) - the membrane proton channel. CF(1) has five subunits: alpha(3), beta(3), gamma(1), delta(1), epsilon(1). CF(0) has three main subunits: a, b and c.

The protein resides in the mitochondrion inner membrane. Functionally, mitochondrial membrane ATP synthase (F(1)F(0) ATP synthase or Complex V) produces ATP from ADP in the presence of a proton gradient across the membrane which is generated by electron transport complexes of the respiratory chain. F-type ATPases consist of two structural domains, F(1) - containing the extramembraneous catalytic core and F(0) - containing the membrane proton channel, linked together by a central stalk and a peripheral stalk. During catalysis, ATP synthesis in the catalytic domain of F(1) is coupled via a rotary mechanism of the central stalk subunits to proton translocation. Part of the complex F(0) domain. A homomeric c-ring of probably 10 subunits is part of the complex rotary element. The polypeptide is ATP synthase subunit 9, mitochondrial (atp-9) (Neurospora crassa (strain ATCC 24698 / 74-OR23-1A / CBS 708.71 / DSM 1257 / FGSC 987)).